The chain runs to 227 residues: Transmembrane emp24 domain-containing protein 1 (227 aa).

The signal sequence occupies residues 1 to 23 (MMAAGAALALALWLLMPPVEVGG). At 24–194 (AGPPPIQDGE…LQEGNLERVN (171 aa)) the chain is on the extracellular side. A GOLD domain is found at 43–125 (KQCFYQSAPA…EKLVFFELIF (83 aa)). The stretch at 145–170 (EMLDVKMEDIKESIETMRTRLERSIQ) forms a coiled coil. The chain crosses the membrane as a helical span at residues 195 to 215 (FWSAVNVAVLLLVAVLQVCTL). Topologically, residues 216–227 (KRFFQDKRPVPT) are cytoplasmic. A COPII vesicle coat-binding motif is present at residues 218-219 (FF). Residues 218–227 (FFQDKRPVPT) carry the COPI vesicle coat-binding motif.

Belongs to the EMP24/GP25L family. In terms of assembly, homodimer in endoplasmic reticulum, endoplasmic reticulum-Golgi intermediate compartment and cis-Golgi network. Interacts with IL1RL1. Interacts with RNF26; this interaction is important to modulate innate immune signaling through the cGAS-STING pathway. In terms of tissue distribution, widely expressed.

It localises to the cell membrane. The protein resides in the endoplasmic reticulum membrane. Its subcellular location is the golgi apparatus. It is found in the cis-Golgi network membrane. The protein localises to the endoplasmic reticulum-Golgi intermediate compartment membrane. Functionally, potential role in vesicular protein trafficking, mainly in the early secretory pathway. May act as a cargo receptor at the lumenal side for incorporation of secretory cargo molecules into transport vesicles and may be involved in vesicle coat formation at the cytoplasmic side. Plays a positive role in IL-33-mediated IL-8 and IL-6 production by interacting with interleukin-33 receptor IL1RL1. Also plays a role in the modulation of innate immune signaling through the cGAS-STING pathway by interacting with RNF26. This Homo sapiens (Human) protein is Transmembrane emp24 domain-containing protein 1 (TMED1).